Reading from the N-terminus, the 119-residue chain is Large ribosomal subunit protein uL18 (119 aa).

It belongs to the universal ribosomal protein uL18 family. In terms of assembly, part of the 50S ribosomal subunit; part of the 5S rRNA/L5/L18/L25 subcomplex. Contacts the 5S and 23S rRNAs.

This is one of the proteins that bind and probably mediate the attachment of the 5S RNA into the large ribosomal subunit, where it forms part of the central protuberance. This chain is Large ribosomal subunit protein uL18, found in Oceanobacillus iheyensis (strain DSM 14371 / CIP 107618 / JCM 11309 / KCTC 3954 / HTE831).